Reading from the N-terminus, the 358-residue chain is Tripartite motif-containing protein 54 (358 aa).

An RING-type zinc finger spans residues 26–82 (CPICLEMFSKPVVILPCQHNLCRKCANDVFQASNPLWQSRGSTTVSSGGRFRCPSCR). The segment at 121 to 163 (EQHLMCEEHEEEKINIYCLSCEVPTCSLCKVFGAHKDCEVAPL) adopts a B box-type zinc-finger fold. Zn(2+) contacts are provided by Cys126, His129, Cys149, and His155. Residues 168-211 (KRQKSELSDGIAMLVAGNDRVQAVITQMEEVCQTIEDNSRRQKQ) form a mediates microtubule-binding and homooligomerization region. Residues 194–258 (QMEEVCQTIE…LIRQYGDHLE (65 aa)) are a coiled coil. The COS domain maps to 271-329 (MEEPQMALYLQQAKELINKVGAMSKVELAGRPEPGYESMEQFTVSVEHVAEMLRTIDFQ). The disordered stretch occupies residues 326-358 (IDFQPGASGEEEEVAPDGDEGSAGQEEERPDGP). Residues 334–345 (GEEEEVAPDGDE) show a composition bias toward acidic residues.

Homooligomer and heterooligomer. Interacts with TRIM63 and probably with TRIM55. Interacts with tubulin.

The protein resides in the cytoplasm. Its subcellular location is the cytoskeleton. The protein localises to the myofibril. It localises to the sarcomere. It is found in the z line. May bind and stabilize microtubules during myotubes formation. In Pongo abelii (Sumatran orangutan), this protein is Tripartite motif-containing protein 54 (TRIM54).